The following is a 533-amino-acid chain: WUSCHEL-related homeobox 7 (533 aa).

2 disordered regions span residues 1–74 (MASS…NPRP) and 125–212 (SKNK…STQA). Over residues 28 to 41 (AGSPPSLLSGSSAG) the composition is skewed to low complexity. Positions 59 to 68 (GEERVPDPKP) are enriched in basic and acidic residues. A DNA-binding region (homeobox; WUS-type) is located at residues 65–129 (DPKPRWNPRP…NRKSRSKNKL (65 aa)). Residues 132 to 143 (GGTGRAGLGLGG) show a composition bias toward gly residues. Residues 161–174 (FTPPPPILPAPQPV) show a composition bias toward pro residues. The span at 175-202 (QPQQQLVSPVAAPTSSSSSSSDRSSGSS) shows a compositional bias: low complexity.

It belongs to the WUS homeobox family.

The protein resides in the nucleus. In terms of biological role, transcription factor which may be involved in developmental processes. This chain is WUSCHEL-related homeobox 7 (WOX7), found in Oryza sativa subsp. japonica (Rice).